The primary structure comprises 1321 residues: C-Jun-amino-terminal kinase-interacting protein 4 (1321 aa).

M1 bears the N-acetylmethionine mark. The region spanning 7-95 is the RH1 domain; sequence VVYQEEPGGS…ITQYEREKAL (89 aa). Positions 66–166 form a coiled coil; the sequence is AQDQEHQVEL…NALHQRHTEM (101 aa). 5 positions are modified to phosphoserine: S109, S183, S185, S194, and S203. The tract at residues 203-292 is disordered; it reads SLGIFPLPAG…SDVATIPTDT (90 aa). Phosphothreonine is present on T217. Residues 236–253 are compositionally biased toward polar residues; sequence ELSQPRSHTSLKVSNSPE. A phosphoserine mark is found at S238, S251, S265, S268, and S272. Over residues 266–285 the composition is skewed to polar residues; that stretch reads DVSQGGSKATTPASTANSDV. T292 carries the phosphothreonine modification. Residues S311, S329, S332, and S347 each carry the phosphoserine modification. A phosphothreonine mark is found at T348, T365, and T418. The stretch at 408–534 forms a coiled coil; that stretch reads REVENLILEN…LQEAVRWTEM (127 aa). A compositionally biased stretch (basic and acidic residues) spans 473–489; it reads LRKARAEAEDARQKAKD. Disordered regions lie at residues 473–500 and 563–600; these read LRKARAEAEDARQKAKDDDDSDIPTAQR and SSNTTKKPEPPVNLKYNAPTSHVTPSVKKRSSTLSQLP. The RH2 domain occupies 500-571; that stretch reads RKRFTRVEMA…SSSNTTKKPE (72 aa). The residue at position 586 (T586) is a Phosphothreonine. S588 bears the Phosphoserine mark. Position 595 is a phosphothreonine (T595). S705, S728, S730, S732, and S733 each carry phosphoserine. Positions 724-758 form a coiled coil; sequence SKQRSASQSSLDKLDQELKEQQKELKNQEELSSLV. Positions 854–906 are disordered; it reads GAATSPSTNGASPVMDKPPEMEAENSEVDENVPTAEEATEATEGNAGSAEDTV. Polar residues predominate over residues 855-864; sequence AATSPSTNGA. Over residues 874 to 883 the composition is skewed to acidic residues; the sequence is MEAENSEVDE. Positions 894 to 903 are enriched in low complexity; it reads ATEGNAGSAE. S1188 is modified (phosphoserine). A disordered region spans residues 1239-1266; the sequence is PQSSSSGTDLTGDKAGPSAQEPGSQTPL. Residue T1264 is modified to Phosphothreonine.

This sequence belongs to the JIP scaffold family. Homodimer. The homodimer interacts with ARF6, forming a heterotetramer. Homooligomer. Interacts with MAX, MAPK14, MAP3K3, MYC, KNS2 and MAP2K4. Interaction with KNS2 is important in the formation of ternary complex with MAPK8. Interacts with NFKB1. Interacts with PIP4P1. Interacts with PIKFYVE. In terms of assembly, interacts with MAPK8, MAPK9, MAPK10. Post-translationally, phosphorylated by MAPK8 and MAPK14. As to expression, expressed only in testis on the round spermatids of stage I, II and II. Absent in spermatogonia and spermatocyte. Expressed in testis and in acute myeloid leukemia (AML) patients. In terms of tissue distribution, expressed in testis.

It is found in the cytoplasm. It localises to the perinuclear region. The protein resides in the lysosome membrane. Its subcellular location is the cytoplasmic vesicle. The protein localises to the secretory vesicle. It is found in the acrosome. With respect to regulation, may play a role in spermatozoa-egg-interaction. The JNK-interacting protein (JIP) group of scaffold proteins selectively mediates JNK signaling by aggregating specific components of the MAPK cascade to form a functional JNK signaling module. Regulates lysosomal positioning by acting as an adapter protein which links PIP4P1-positive lysosomes to the dynein-dynactin complex. Assists PIKFYVE selective functionality in microtubule-based endosome-to-TGN trafficking. The sequence is that of C-Jun-amino-terminal kinase-interacting protein 4 from Homo sapiens (Human).